A 119-amino-acid chain; its full sequence is Ribosome-binding factor A (119 aa).

The protein belongs to the RbfA family. In terms of assembly, monomer. Binds 30S ribosomal subunits, but not 50S ribosomal subunits or 70S ribosomes.

Its subcellular location is the cytoplasm. Its function is as follows. One of several proteins that assist in the late maturation steps of the functional core of the 30S ribosomal subunit. Associates with free 30S ribosomal subunits (but not with 30S subunits that are part of 70S ribosomes or polysomes). Required for efficient processing of 16S rRNA. May interact with the 5'-terminal helix region of 16S rRNA. The chain is Ribosome-binding factor A from Ligilactobacillus salivarius (strain UCC118) (Lactobacillus salivarius).